A 317-amino-acid chain; its full sequence is MPKLKLIGVDLGGTTFSVGLVSEDGKILKKVTRDTLVENGKEDVIRRIAETILEVSDGEEAPYVGIGSPGSIDRENGIVRFSPNFPDWHNVPLTDELAKRTGKKVFLENDANAFVLGEKWFGAGRGHDHIVALTLGTGIGGGVVTHGYLLTGRDGIGAELGHVVVEPNGPMCNCGTRGCLEAVASATAIRRFLREGYKKYHSSLVYKLAGSPEKADAKHLFDAARQGDRFALMIRDRVVDALARAVAGYIHIFNPEIVIIGGGISRAGEILFGPLREKVVDYIMPSFVGTYEVVASPLVEDAGILGAASIIKERIGG.

The protein belongs to the ROK (NagC/XylR) family. As to quaternary structure, homodimer. A divalent metal cation is required as a cofactor.

The enzyme catalyses D-glucose + ATP = D-glucose 6-phosphate + ADP + H(+). Functionally, catalyzes the phosphorylation of D-glucose to D-glucose 6-phosphate using ATP as the phosphate donor. Can also phosphorylate 2-deoxyglucose, with lower efficiency. ITP can also serve as a phosphoryl donor. The polypeptide is Glucokinase (Thermotoga maritima (strain ATCC 43589 / DSM 3109 / JCM 10099 / NBRC 100826 / MSB8)).